Here is a 524-residue protein sequence, read N- to C-terminus: Glycoprotein (524 aa).

Residues 1–19 (MVPQVLLFAPLLVFPLCFG) form the signal peptide. The Virion surface segment spans residues 20-459 (KFPIYTIPDK…DLGLPKWGKY (440 aa)). 6 cysteine pairs are disulfide-bonded: cysteine 43-cysteine 302, cysteine 54-cysteine 226, cysteine 80-cysteine 113, cysteine 178-cysteine 188, cysteine 208-cysteine 247, and cysteine 242-cysteine 271. A glycan (N-linked (GlcNAc...) asparagine; by host) is linked at asparagine 56. A glycan (N-linked (GlcNAc...) asparagine; by host) is linked at asparagine 177. The N-linked (GlcNAc...) asparagine; by host glycan is linked to asparagine 338. The cysteines at positions 363 and 370 are disulfide-linked. A helical membrane pass occupies residues 460 to 480 (VLMIAGALIALMLIIFLMTCC). Cysteine 480 carries the S-palmitoyl cysteine; by host lipid modification. The Intravirion portion of the chain corresponds to 481–524 (RRVNRPESTQSNLGGTGRNVSVPSQSGKVISSWESYKSGGETRL). The interval 487–506 (ESTQSNLGGTGRNVSVPSQS) is disordered.

Belongs to the lyssavirus glycoprotein family. In terms of assembly, homotrimer. Interacts with matrix protein. Interacts with host TRFC. Interacts with host BST2; this interaction inhibits viral budding by tethering new virions to the cell surface. Interacts with ITGB1. Interacts with host GRM2. In terms of processing, glycosylated and palmitoylated by host. Glycosylation is crucial for glycoprotein export at the cell surface.

The protein resides in the virion membrane. Functionally, attaches the virus to host cellular receptor, inducing endocytosis of the virion by using different host proteins including TFRC, GRM2 and ITGB1. In the endosome, the acidic pH induces conformational changes in the glycoprotein trimer, which trigger fusion between virus and cell membrane. There is convincing in vitro evidence that the muscular form of the nicotinic acetylcholine receptor (nAChR), the neuronal cell adhesion molecule (NCAM), and the p75 neurotrophin receptor (p75NTR) bind glycoprotein and thereby facilitate rabies virus entry into cells. The polypeptide is Glycoprotein (G) (Homo sapiens (Human)).